Consider the following 518-residue polypeptide: Cell wall biosynthesis protein LcpA (518 aa).

The Cytoplasmic segment spans residues 1–31; it reads MTEKYRPVRDIKPAPAAMQSTKQAGHPVFRS. The chain crosses the membrane as a helical span at residues 32 to 52; the sequence is VVAFVSVLVLLVSGLGYLAVG. The Periplasmic segment spans residues 53–518; the sequence is KVDGVASGNL…AGGDGPRCVN (466 aa). Residues 485–518 form a disordered region; it reads AVTSSTVGQPGADVGEPIESPEFDAGGDGPRCVN.

The protein belongs to the LytR/CpsA/Psr (LCP) family. As to quaternary structure, forms homodimers and homotetramers.

Its subcellular location is the cell inner membrane. Its function is as follows. Involved in cell wall biosynthesis. May be responsible for the transfer of arabinogalactan onto peptidoglycan. In vitro, has pyrophosphatase activity. The polypeptide is Cell wall biosynthesis protein LcpA (Corynebacterium glutamicum (strain ATCC 13032 / DSM 20300 / JCM 1318 / BCRC 11384 / CCUG 27702 / LMG 3730 / NBRC 12168 / NCIMB 10025 / NRRL B-2784 / 534)).